A 275-amino-acid polypeptide reads, in one-letter code: Rhamnulose-1-phosphate aldolase (275 aa).

Glu117 is an active-site residue. 3 residues coordinate Zn(2+): His141, His143, and His212.

This sequence belongs to the aldolase class II family. RhaD subfamily. As to quaternary structure, homotetramer. Zn(2+) serves as cofactor.

Its subcellular location is the cytoplasm. The catalysed reaction is L-rhamnulose 1-phosphate = (S)-lactaldehyde + dihydroxyacetone phosphate. Its pathway is carbohydrate degradation; L-rhamnose degradation; glycerone phosphate from L-rhamnose: step 3/3. Catalyzes the reversible cleavage of L-rhamnulose-1-phosphate to dihydroxyacetone phosphate (DHAP) and L-lactaldehyde. The sequence is that of Rhamnulose-1-phosphate aldolase from Salmonella paratyphi B (strain ATCC BAA-1250 / SPB7).